The following is a 201-amino-acid chain: MVYSVGLTGNIASGKSTVAEFFSELGINVIYADKIAKELTSKNTPCYQDIISHFGSSVVLNNGELDRKRIRDIIFSNSNERLWLESLLHPVIREKIEEQLIACTSPYCLIEIPLLFNKHHYPYLQKVLLVIAPLESQLDRIVKRDHCTKKQALAILATQPNLEQRLEAADDVLINESGLSELKAKVNKLHQKYLREAKIKQ.

In terms of domain architecture, DPCK spans 4-201; that stretch reads SVGLTGNIAS…KYLREAKIKQ (198 aa). 12 to 17 contacts ATP; that stretch reads ASGKST.

Belongs to the CoaE family.

It is found in the cytoplasm. The catalysed reaction is 3'-dephospho-CoA + ATP = ADP + CoA + H(+). The protein operates within cofactor biosynthesis; coenzyme A biosynthesis; CoA from (R)-pantothenate: step 5/5. Catalyzes the phosphorylation of the 3'-hydroxyl group of dephosphocoenzyme A to form coenzyme A. The chain is Dephospho-CoA kinase from Legionella pneumophila (strain Paris).